Reading from the N-terminus, the 1223-residue chain is Rho family-interacting cell polarization regulator 1 (1223 aa).

Ser22 bears the Phosphoserine mark. Residues 83–112 adopt a coiled-coil conformation; that stretch reads RGLTAYLEVHQQEQEKLQRQIKESKRNSRL. Residues Ser345 and Ser347 each carry the phosphoserine modification. Residue Thr351 is modified to Phosphothreonine. A disordered region spans residues 371 to 411; sequence NGTAWSLSSESSDDSSSPQLSGTARHSTPKPLVQQPEPLPV. 2 stretches are compositionally biased toward low complexity: residues 376-391 and 399-411; these read SLSSESSDDSSSPQLS and PKPLVQQPEPLPV. 3 positions are modified to phosphoserine: Ser451, Ser454, and Ser468. Low complexity-rich tracts occupy residues 566-586 and 595-655; these read TTIGSAHTTTPSPLTSTGSVP and TPSP…TSPT. Disordered regions lie at residues 566–771 and 856–887; these read TTIG…QHSE and FLNDDEDEDNDGPGDRHTSSPEVVAEDRLDSS. Residues 656–665 are compositionally biased toward polar residues; sequence QEAKMSTHTT. The span at 673-688 shows a compositional bias: low complexity; sequence TTTSPISTTESPSPST. Composition is skewed to polar residues over residues 693 to 703 and 725 to 741; these read ISSSSAESTGP and ASCTSYQSLASSGSKPL. Phosphoserine is present on Ser748. The span at 748–767 shows a compositional bias: low complexity; sequence SPEQIPKSPSSSPSSSAPEP. The segment covering 858–867 has biased composition (acidic residues); the sequence is NDDEDEDNDG. Basic and acidic residues predominate over residues 868–885; that stretch reads PGDRHTSSPEVVAEDRLD. Phosphoserine occurs at positions 874 and 875.

The protein belongs to the RIPOR family. As to quaternary structure, interacts (via N-terminus) with RHOA (GTP-bound form); this interaction links active RHOA to STK24 and STK26 kinases. Interacts with RHOB. Interacts with RHOC. Interacts (via C-terminus) with PDCD10; this interaction occurs in a Rho-independent manner. Interacts (via C-terminus) with STK24; this interaction occurs in a PDCD10-dependent and Rho-independent manner. Interacts (via C-terminus) with STK26; this interaction occurs in a PDCD10-dependent and Rho-independent manner. Interacts (via N-terminus) with 14-3-3 proteins; these interactions occur in a Rho-dependent manner. As to expression, expressed in the kidney exclusively by glomerular podocytes.

Its subcellular location is the cytoplasm. It localises to the golgi apparatus. Functionally, downstream effector protein for Rho-type small GTPases that plays a role in cell polarity and directional migration. Acts as an adapter protein, linking active Rho proteins to STK24 and STK26 kinases, and hence positively regulates Golgi reorientation in polarized cell migration upon Rho activation. Involved in the subcellular relocation of STK26 from the Golgi to cytoplasm punctae in a Rho- and PDCD10-dependent manner upon serum stimulation. This is Rho family-interacting cell polarization regulator 1 from Mus musculus (Mouse).